The following is a 372-amino-acid chain: MKIGIPREIKNNENRVGLSPSGVHALVESGHTVLVETNAGSGSFFEDVDYKEAGAEIVAEQAKVWDVDMVIKVKEPLESEYPYFKEGLVLFTYLHLANEEKLTQALIDRKVISIAYETVQLPDRSLPLLSPMSEVAGRMSAQVGAEFLQKLNGGMGILLGGVPGVPKGKVTIIGGGQAGTNAAKIALGLGADVTILDVNPKRLQQLDDLFGGRVHTIMSNPLNIELYVKQSDLVIGAVLIPGAKAPRLVTEDMIKQMKNGSVIIDIAIDQGGIFETTDKITTHDDPTYIKHGVVHYAVANMPGAVPRTSTLALNNATLPYALMLANKGYREAFKSNQPLSLGLNTYKGHVTNKGVAEAFEMEYKSVEEALQL.

The active site involves histidine 95. Position 169 to 199 (169 to 199) interacts with NAD(+); sequence KVTIIGGGQAGTNAAKIALGLGADVTILDVN.

This sequence belongs to the AlaDH/PNT family.

The catalysed reaction is L-alanine + NAD(+) + H2O = pyruvate + NH4(+) + NADH + H(+). It functions in the pathway amino-acid degradation; L-alanine degradation via dehydrogenase pathway; NH(3) and pyruvate from L-alanine: step 1/1. May play a role in cell wall synthesis as L-alanine is an important constituent of the peptidoglycan layer. This chain is Alanine dehydrogenase 2 (ald2), found in Staphylococcus aureus (strain COL).